We begin with the raw amino-acid sequence, 133 residues long: Fatty acid-binding protein, heart (133 aa).

The residue at position 2 (Val-2) is an N-acetylvaline. Phosphothreonine is present on Thr-8. Phosphotyrosine; by Tyr-kinases is present on Tyr-20. Ser-23 carries the phosphoserine modification. Phosphothreonine is present on Thr-30. A Phosphoserine modification is found at Ser-83. 127–129 (RTY) contacts (9Z)-octadecenoate. Residue 127–129 (RTY) coordinates hexadecanoate. 127–129 (RTY) lines the octadecanoate pocket.

It belongs to the calycin superfamily. Fatty-acid binding protein (FABP) family.

Its subcellular location is the cytoplasm. FABPs are thought to play a role in the intracellular transport of long-chain fatty acids and their acyl-CoA esters. The chain is Fatty acid-binding protein, heart (FABP3) from Sus scrofa (Pig).